The chain runs to 176 residues: Sigma intracellular receptor 2 (176 aa).

The Cytoplasmic portion of the chain corresponds to 1–9 (MGTLGARRG). A helical transmembrane segment spans residues 10 to 30 (LEWFLGFYFLSHIPITLLMDL). Residues 10–158 (LEWFLGFYFL…PYFLIPLILL (149 aa)) form the EXPERA domain. Residues 31-68 (QGVLPRDLYPVELRNLQQWYIEEFKDPLLQTPPAWFKS) are Lumenal-facing. Residues 69-89 (FLFCELVFQLPFFPIAAYAFF) traverse the membrane as a helical segment. Residues Val75 and Gln77 each contribute to the cholesterol site. Over 90–99 (KGGCKWIRTP) the chain is Cytoplasmic. Residues 100–120 (AIIYSVHTMTTLIPILSTLLL) form a helical membrane-spanning segment. Residues 121-141 (DDFSKASHFRGQGPKTFQERL) lie on the Lumenal side of the membrane. The chain crosses the membrane as a helical span at residues 142–162 (FLISVYIPYFLIPLILLLFMV). The Cytoplasmic segment spans residues 163 to 176 (RNPYYKSEEKRKKK). The ER retention motif motif lies at 172–176 (KRKKK).

Belongs to the TMEM97/sigma-2 receptor family. In terms of assembly, homodimer. Interacts with NPC1; the interaction impairs NPC1-mediated cholesterol transport. Interacts with PGRMC1 and LDLR; the interaction increases LDL internalization. Interacts with histatin 1/HTN1; the interaction induces HTN1-stimulating wound healing. Interacts with TSPO.

The protein resides in the rough endoplasmic reticulum membrane. The protein localises to the nucleus membrane. Functionally, sigma-2 receptor which contributes to ameliorate dysfunctional cellular processes and slow degenerative progression by regulating cell functions including cholesterol biosynthesis/trafficking, membrane trafficking, autophagy, lipid membrane-bound protein trafficking, and receptor stabilization at the cell surface. Forms a ternary complex with PGRMC1 receptor and low density lipoprotein receptor/LDLR at the plasma membrane, which increases LDLR-mediated LDL cholesterol internalization. Decreases lysosomal sterol transporter NPC1 availability to the cell, probably through NPC1-binding, hence controlling lipid transport, including cholesterol and LBPA, outside of late endosome/lysosome. Binds regio- and stereoselective ligand 20(S)-hydroxycholesterol (20(S)-OHC) which enhances TMEM97-NPC1 interaction and decreases TMEM97-PGRMC1 and TMEM97-TSPO interactions, thereby linking OHC binding to cholesterol homeostasis. Also able to bind cholesterol. Binds histatin 1 (Hst 1)/HN1 salivary peptide at the ER membrane, which is critical for increasing mitochondria-ER contacts and stimulating Hst1 wound healing properties. May alter the activity of some cytochrome P450 proteins. Although shows homologies with sterol isomerases (EXPERA domain), not able to catalyze sterol isomerization. However, may act as sensors of these molecules. Acts as a quality control factor in the ER, promoting the proteolytic degradation of nonproductive and extramitochondrial precursor proteins in the ER membrane thus removing them from the ER surface. The protein is Sigma intracellular receptor 2 (TMEM97) of Bos taurus (Bovine).